The chain runs to 105 residues: uncharacterized protein (105 aa).

The tract at residues threonine 80–aspartate 105 is disordered.

This is an uncharacterized protein from Micromonospora rosea.